The chain runs to 832 residues: Cadherin-like protein 26 (832 aa).

The N-terminal stretch at 1-27 (MAMRSGRHPSLLLLLVLLLWLLQVSII) is a signal peptide. Residues 28–614 (DSVQQETDDL…ELADAEVGLH (587 aa)) are Extracellular-facing. Cadherin domains follow at residues 35–165 (DDLT…APQF), 166–275 (PEKE…RPAF), 276–396 (TQEN…PPAF), and 397–500 (HPQS…VPTL). N-linked (GlcNAc...) asparagine glycosylation is found at Asn-81, Asn-85, Asn-171, and Asn-177. Residue Asn-462 is glycosylated (N-linked (GlcNAc...) asparagine). A helical membrane pass occupies residues 615 to 635 (VGALFPVCAAFVALAVALLFL). At 636–832 (LRCYFVLEPK…EIYSESGVPS (197 aa)) the chain is on the cytoplasmic side. The tract at residues 813–832 (SLGSKATPFEEIYSESGVPS) is disordered.

Homodimer. Component of a cadherin:catenin adhesion complex composed of at least of CDH26, beta-catenin/CTNNB1, alpha-catenin/CTNNA1 and p120 catenin/CTNND1. Post-translationally, N-glycosylated. As to expression, expressed by epithelial cells of gastrointestinal tissue.

It localises to the cell membrane. Its function is as follows. Cadherins are calcium-dependent cell adhesion proteins. They preferentially interact with themselves in a homophilic manner in connecting cells; cadherins may thus contribute to the sorting of heterogeneous cell types. Ligand for integrins alpha-E/beta-7, ITGAE:ITGAB7, alpha-4/beta-7, ITGA4:ITGAB7 and alpha-4/beta-1, ITGA4:ITGAB1 through which modulates CD4(+) T cells activation. The protein is Cadherin-like protein 26 (CDH26) of Homo sapiens (Human).